Consider the following 444-residue polypeptide: Divalent metal cation transporter MntH (444 aa).

The next 11 membrane-spanning stretches (helical) occupy residues Gly31–Gly51, Phe68–Gly88, Leu115–Gly135, Ile146–Met166, Ala175–Ala195, Val212–Pro232, Val267–Phe287, Ala303–Leu323, Leu356–Ala376, Leu381–Val401, and Leu413–Leu433.

The protein belongs to the NRAMP family.

Its subcellular location is the cell inner membrane. H(+)-stimulated, divalent metal cation uptake system. In Xanthomonas campestris pv. campestris (strain ATCC 33913 / DSM 3586 / NCPPB 528 / LMG 568 / P 25), this protein is Divalent metal cation transporter MntH.